We begin with the raw amino-acid sequence, 100 residues long: Urease subunit gamma (100 aa).

The protein belongs to the urease gamma subunit family. Heterotrimer of UreA (gamma), UreB (beta) and UreC (alpha) subunits. Three heterotrimers associate to form the active enzyme.

It is found in the cytoplasm. The catalysed reaction is urea + 2 H2O + H(+) = hydrogencarbonate + 2 NH4(+). Its pathway is nitrogen metabolism; urea degradation; CO(2) and NH(3) from urea (urease route): step 1/1. This Leptothrix cholodnii (strain ATCC 51168 / LMG 8142 / SP-6) (Leptothrix discophora (strain SP-6)) protein is Urease subunit gamma.